A 360-amino-acid chain; its full sequence is NAD(P)H-quinone oxidoreductase subunit 1, chloroplastic (360 aa).

The next 8 helical transmembrane spans lie at 29–49, 96–116, 128–148, 166–186, 204–224, 255–277, 297–317, and 333–353; these read WIPLPILVVIVGATIGVLVIV, IWLFTLGPALVVIPVFLAYLV, ISLGVFFWIAISSIAPIGLLM, AAQAISYEIPLSLCVLAICLL, ILGWNVWRQPIGFVSFLIAAL, GLFYVGSYVNLLLSSLFATILYL, IFAAFLGIGMTLLKAYLFIFL, and LLDLGWKFLLPISLGNLLLTA.

The protein belongs to the complex I subunit 1 family. As to quaternary structure, NDH is composed of at least 16 different subunits, 5 of which are encoded in the nucleus.

It localises to the plastid. The protein resides in the chloroplast thylakoid membrane. The enzyme catalyses a plastoquinone + NADH + (n+1) H(+)(in) = a plastoquinol + NAD(+) + n H(+)(out). The catalysed reaction is a plastoquinone + NADPH + (n+1) H(+)(in) = a plastoquinol + NADP(+) + n H(+)(out). Functionally, NDH shuttles electrons from NAD(P)H:plastoquinone, via FMN and iron-sulfur (Fe-S) centers, to quinones in the photosynthetic chain and possibly in a chloroplast respiratory chain. The immediate electron acceptor for the enzyme in this species is believed to be plastoquinone. Couples the redox reaction to proton translocation, and thus conserves the redox energy in a proton gradient. In Chlorokybus atmophyticus (Soil alga), this protein is NAD(P)H-quinone oxidoreductase subunit 1, chloroplastic.